Reading from the N-terminus, the 42-residue chain is Delta-hexatoxin-Hv1a (42 aa).

4 disulfide bridges follow: cysteine 1–cysteine 15, cysteine 8–cysteine 20, cysteine 14–cysteine 31, and cysteine 16–cysteine 42.

The protein belongs to the neurotoxin 06 (delta-actx) family. As to expression, expressed by the venom gland.

It localises to the secreted. Functionally, inhibits tetrodotoxin-sensitive voltage-gated sodium channels (Nav) by binding to site 3. Slows the inactivation, and causes a prolongation of action potential duration resulting in repetitive firing in autonomic and motor nerve fibers. Does not depolarize the resting potential. Does not affect tetrodotoxin-resistant sodium channels. This lethal neurotoxin is active on both insect and mammalian voltage-gated sodium channels. Pan-neuronal expression in Drosophila is lethal but flies engineered to express the toxin only in pacemaker neurons have profound defects in circadian rhythm but a normal lifespan. This is Delta-hexatoxin-Hv1a from Hadronyche versuta (Blue mountains funnel-web spider).